The primary structure comprises 579 residues: MNQRDTLWILTAVLNATNCSMQLEHSSSFILRPNNQVVVFPFIFRGCNIAVLPTAKHSDLRRNPKRMEDSEPLFCNISHIIWSFTIGGVAYKDDDRFKRLFSERMEGYLKDISSNTSKVYMKGNKTFSEFLEAVYKRIFQCDGKRGGHVMRYGEDVMKEIGGMMENAPPELSEEEKRQHQRLWGNIKKYTEYLYNIERLKHLIEVEKMVCDACKEICLGLREEELMGLLAEGRMRKSLKMKLGDEEAGKKGYLEYAIVNDEILLDAHREYGGEVTKELVMQMLLGKKGEEIDKRYINKVANMIKERQRRREREIEKRVKKLLRDEEKAKGRKDGKKKSVNVSEVKEEESETEEVEAGEEAEMPSMEIGGARRKTGKKSRGGRKRYKIHKRVSRWRKSPEKIKEEWDRESEERWRGRSLEEIKEQKVFHDIAGVLELLRSEDADKFFIDTGEYTKGGSSRGRLVAIGVLESGEKKMLGVVEVGTFKDSPSGCPVVYHLMFRVTGIEEIGSVMSPEFAEANDIEKIDEDKEYQDMGKFVYPKGTEYEIVRREQSFQIVWGNPFDTSEVLCRLTIQCRPCVI.

Disordered regions lie at residues 325–360 and 370–389; these read EEKA…GEEA and ARRK…KIHK. The span at 329 to 338 shows a compositional bias: basic residues; it reads KGRKDGKKKS. A compositionally biased stretch (acidic residues) spans 345–360; sequence KEEESETEEVEAGEEA.

Belongs to the UPF0329 family.

This Encephalitozoon cuniculi (strain GB-M1) (Microsporidian parasite) protein is UPF0329 protein ECU06_1620.